Reading from the N-terminus, the 62-residue chain is UPF0434 protein NGR_c31900 (62 aa).

The protein belongs to the UPF0434 family.

In Sinorhizobium fredii (strain NBRC 101917 / NGR234), this protein is UPF0434 protein NGR_c31900.